The chain runs to 523 residues: Membrane protein PTM1 (523 aa).

The N-terminal stretch at 1-26 (MRVYQFCRPFQLFTYFLCYLLVFVKA) is a signal peptide. The Lumenal portion of the chain corresponds to 27-197 (NKEKISQKNY…LAGTEINKLP (171 aa)). N-linked (GlcNAc...) asparagine glycosylation occurs at Asn-132. Residues 198–218 (LYGLLAVAYVVAMALYSFAFW) form a helical membrane-spanning segment. The Cytoplasmic segment spans residues 219 to 230 (KHKHELLPLQKY). The helical transmembrane segment at 231-251 (LLAFFVFLTAETIFVWAYYDL) threads the bilayer. The Lumenal segment spans residues 252-265 (KNEKGDTAGIKVYM). A helical transmembrane segment spans residues 266–286 (VFLSILTAGKVTFSFFLLLII). Over 287–304 (ALGYGIVYPKLNKTLMRR) the chain is Cytoplasmic. Residues 305–325 (CQMYGALTYAICIGFLIQSYL) traverse the membrane as a helical segment. At 326-333 (TDMEAPSP) the chain is on the lumenal side. The helical transmembrane segment at 334 to 354 (LILITLIPMALALIIFYYMII) threads the bilayer. Topologically, residues 355–381 (RSMTKTVIYLKEQRQIVKLNMYKKLLY) are cytoplasmic. The chain crosses the membrane as a helical span at residues 382–402 (IIYASFLSVLAGSIVSSFIYV). The Lumenal segment spans residues 403–417 (GMNTIDMIEKNWRSR). A helical membrane pass occupies residues 418–438 (FFVTDFWPTLVYFIVFVTIAF). Topologically, residues 439–523 (LWRPTDTSYM…HGPVSPSPTK (85 aa)) are cytoplasmic. At Ser-480 the chain carries Phosphoserine. Residues Thr-483 and Thr-498 each carry the phosphothreonine modification. Residues 483–523 (TGERGIDEDDLNLNFTDDEEGHDNVNNHSQGHGPVSPSPTK) are disordered. Over residues 488–503 (IDEDDLNLNFTDDEEG) the composition is skewed to acidic residues.

This sequence belongs to the LU7TM family.

The protein resides in the golgi apparatus membrane. The protein localises to the early endosome membrane. The protein is Membrane protein PTM1 (PTM1) of Saccharomyces cerevisiae (strain YJM789) (Baker's yeast).